Reading from the N-terminus, the 230-residue chain is Heptaprenylglyceryl phosphate synthase (230 aa).

Lysine 12 lines the sn-glycerol 1-phosphate pocket. Mg(2+) contacts are provided by aspartate 14 and threonine 40. Residues 159–164 (YIEYSG), glycine 189, and 209–210 (GD) each bind sn-glycerol 1-phosphate.

This sequence belongs to the GGGP/HepGP synthase family. Group I subfamily. In terms of assembly, homodimer. Mg(2+) serves as cofactor.

The enzyme catalyses sn-glycerol 1-phosphate + all-trans-heptaprenyl diphosphate = 3-heptaprenyl-sn-glycero-1-phosphate + diphosphate. It participates in membrane lipid metabolism; glycerophospholipid metabolism. Functionally, prenyltransferase that catalyzes in vivo the transfer of the heptaprenyl moiety of heptaprenyl pyrophosphate (HepPP; 35 carbon atoms) to the C3 hydroxyl of sn-glycerol-1-phosphate (G1P), producing heptaprenylglyceryl phosphate (HepGP). This reaction is an ether-bond-formation step in the biosynthesis of archaea-type G1P-based membrane lipids found in Bacillales. This chain is Heptaprenylglyceryl phosphate synthase, found in Staphylococcus aureus (strain MRSA252).